The following is a 628-amino-acid chain: Eukaryotic peptide chain release factor GTP-binding subunit ERF3B (628 aa).

Low complexity predominate over residues 1-10 (MDSGSSSSDS). Disordered stretches follow at residues 1–49 (MDSG…SAFS), 72–124 (FLRG…LEGS), and 146–195 (LEES…VIVP). In terms of domain architecture, tr-type G spans 201 to 425 (KEHVNVVFIG…YLDNLPNFNR (225 aa)). The tract at residues 210–217 (GHVDAGKS) is G1. 213 to 218 (DAGKST) serves as a coordination point for GTP. The G2 stretch occupies residues 266–270 (GKTVE). The segment at 287–290 (DAPG) is G3. GTP is bound by residues 349–352 (NKMD) and 391–393 (SGL). A G4 region spans residues 349–352 (NKMD). A G5 region spans residues 391–393 (SGL).

Belongs to the TRAFAC class translation factor GTPase superfamily. Classic translation factor GTPase family. ERF3 subfamily. In terms of assembly, component of the eRF1-eRF3-GTP ternary complex, composed of ETF1/ERF1 and ERF3 (GSPT1/ERF3A or GSPT2/ERF3B) and GTP. Component of the transient SURF (SMG1-UPF1-eRF1-eRF3) complex. Interacts with UPF1 and PABPC1. Highly expressed in IUCC stage II colorectal cancer (CRC).

Its subcellular location is the cytoplasm. It catalyses the reaction GTP + H2O = GDP + phosphate + H(+). Functionally, GTPase component of the eRF1-eRF3-GTP ternary complex, a ternary complex that mediates translation termination in response to the termination codons UAA, UAG and UGA. GSPT2/ERF3B mediates ETF1/ERF1 delivery to stop codons: The eRF1-eRF3-GTP complex binds to a stop codon in the ribosomal A-site. GTP hydrolysis by GSPT2/ERF3B induces a conformational change that leads to its dissociation, permitting ETF1/ERF1 to accommodate fully in the A-site. Component of the transient SURF complex which recruits UPF1 to stalled ribosomes in the context of nonsense-mediated decay (NMD) of mRNAs containing premature stop codons. This chain is Eukaryotic peptide chain release factor GTP-binding subunit ERF3B (GSPT2), found in Homo sapiens (Human).